The chain runs to 113 residues: Ribulose bisphosphate carboxylase small subunit (113 aa).

It belongs to the RuBisCO small chain family. Heterohexadecamer of 8 large and 8 small subunits. RuBisCO interacts with the C-terminus of CcmM, and can be found in complexes that also include carbonic anhydrase (ccaA).

Its subcellular location is the carboxysome. Its function is as follows. RuBisCO catalyzes two reactions: the carboxylation of D-ribulose 1,5-bisphosphate, the primary event in carbon dioxide fixation, as well as the oxidative fragmentation of the pentose substrate in the photorespiration process. Both reactions occur simultaneously and in competition at the same active site. Although the small subunit is not catalytic it is essential for maximal activity. The protein is Ribulose bisphosphate carboxylase small subunit of Synechocystis sp. (strain ATCC 27184 / PCC 6803 / Kazusa).